Here is a 433-residue protein sequence, read N- to C-terminus: Oxysterol-binding protein-like protein OBPa (433 aa).

The protein belongs to the OSBP family.

This is Oxysterol-binding protein-like protein OBPa (OBPA) from Candida albicans (strain SC5314 / ATCC MYA-2876) (Yeast).